We begin with the raw amino-acid sequence, 269 residues long: uncharacterized protein (269 aa).

A coiled-coil region spans residues 3 to 66; sequence VDQAAIDEIL…QNLQNLAEGA (64 aa). Residues 83 to 142 form a disordered region; sequence AQIPEPPKPEPEVEQPETETGPEPEPEAEPELKEVKEDEPPEEDVVRELDESKSAEPIPE. The span at 94–111 shows a compositional bias: acidic residues; the sequence is EVEQPETETGPEPEPEAE. Residues 112–136 are compositionally biased toward basic and acidic residues; that stretch reads PELKEVKEDEPPEEDVVRELDESKS.

This is an uncharacterized protein from Archaeoglobus fulgidus (strain ATCC 49558 / DSM 4304 / JCM 9628 / NBRC 100126 / VC-16).